The following is a 105-amino-acid chain: D-galactoside-specific lectin (105 aa).

The region spanning 13–103 is the SUEL-type lectin domain; sequence VCEDSSLTIS…KYLAVTYICS (91 aa).

In terms of assembly, homodimer; disulfide-linked.

The protein resides in the cytoplasm. Functionally, this protein binds D-galactoside. May have an important role in the activation of eggs (triggered by fertilization), or in their subsequent differentiation. The dimeric form is essential for hemagglutination activity. The polypeptide is D-galactoside-specific lectin (Heliocidaris crassispina (Sea urchin)).